A 494-amino-acid chain; its full sequence is Glutamyl-tRNA(Gln) amidotransferase subunit A (494 aa).

Active-site charge relay system residues include Lys78 and Ser158. Ser182 functions as the Acyl-ester intermediate in the catalytic mechanism.

The protein belongs to the amidase family. GatA subfamily. In terms of assembly, heterotrimer of A, B and C subunits.

The catalysed reaction is L-glutamyl-tRNA(Gln) + L-glutamine + ATP + H2O = L-glutaminyl-tRNA(Gln) + L-glutamate + ADP + phosphate + H(+). Functionally, allows the formation of correctly charged Gln-tRNA(Gln) through the transamidation of misacylated Glu-tRNA(Gln) in organisms which lack glutaminyl-tRNA synthetase. The reaction takes place in the presence of glutamine and ATP through an activated gamma-phospho-Glu-tRNA(Gln). The polypeptide is Glutamyl-tRNA(Gln) amidotransferase subunit A (Xanthobacter autotrophicus (strain ATCC BAA-1158 / Py2)).